Reading from the N-terminus, the 440-residue chain is Xylose isomerase (440 aa).

Residues histidine 101 and aspartate 104 contribute to the active site. Mg(2+) is bound by residues glutamate 232, glutamate 268, histidine 271, aspartate 296, aspartate 307, aspartate 309, and aspartate 339.

This sequence belongs to the xylose isomerase family. As to quaternary structure, homotetramer. It depends on Mg(2+) as a cofactor.

Its subcellular location is the cytoplasm. It carries out the reaction alpha-D-xylose = alpha-D-xylulofuranose. The sequence is that of Xylose isomerase from Salmonella agona (strain SL483).